Here is a 152-residue protein sequence, read N- to C-terminus: Ubiquitin-conjugating enzyme E2 A (152 aa).

The region spanning 4–150 (PARRRLMRDF…VSAIVEQSWR (147 aa)) is the UBC core domain. Catalysis depends on cysteine 88, which acts as the Glycyl thioester intermediate. Phosphoserine; by CDK9 is present on serine 120.

It belongs to the ubiquitin-conjugating enzyme family. Interacts with RAD18 and WAC. Interacts with RFPL4A and CCNB1. In terms of processing, phosphorylation at Ser-120 by CDK9 increases activity towards histone H2B.

Its subcellular location is the late endosome. It is found in the lysosome. The catalysed reaction is S-ubiquitinyl-[E1 ubiquitin-activating enzyme]-L-cysteine + [E2 ubiquitin-conjugating enzyme]-L-cysteine = [E1 ubiquitin-activating enzyme]-L-cysteine + S-ubiquitinyl-[E2 ubiquitin-conjugating enzyme]-L-cysteine.. It participates in protein modification; protein ubiquitination. Its function is as follows. E2 ubiquitin-conjugating enzyme that accepts ubiquitin from the ubiquitin-activating enzyme E1 and transfers it to a E3 ubiquitin-protein ligase. In vitro catalyzes 'Lys-11', as well as 'Lys-48'-linked polyubiquitination. Together with the E3 enzyme BRE1 (RNF20 and/or RNF40), plays a role in transcription regulation by catalyzing the monoubiquitination of histone H2B at 'Lys-120' to form H2BK120ub1. H2BK120ub1 gives a specific tag for epigenetic transcriptional activation, elongation by RNA polymerase II, telomeric silencing, and is also a prerequisite for H3K4me and H3K79me formation. Involved in mitophagy by acting as a E2 ubiquitin-conjugating enzyme for PRKN. In association with the E3 enzyme UBR4, is involved in N-end rule-dependent protein degradation. In association with the E3 ubiquitin-protein ligase complex SIFI, inhibits the mitochondrial stress response by acting as a E2 ubiquitin-conjugating enzyme for UBR4 and KCMF1. The protein is Ubiquitin-conjugating enzyme E2 A of Homo sapiens (Human).